The sequence spans 424 residues: Tyrosine--tRNA ligase (424 aa).

Tyr-37 contacts L-tyrosine. The 'HIGH' region motif lies at 42–51; sequence PTADSLHLGH. Residues Tyr-175 and Gln-179 each coordinate L-tyrosine. The 'KMSKS' region signature appears at 235–239; that stretch reads KFGKT. Lys-238 is an ATP binding site. The region spanning 357 to 414 is the S4 RNA-binding domain; that stretch reads ADLQQALVNAELVPSRGQARTMIGSNAVAINGEKQADPEYVFTDADRLFGRYTLLRRG.

This sequence belongs to the class-I aminoacyl-tRNA synthetase family. TyrS type 1 subfamily. In terms of assembly, homodimer.

The protein resides in the cytoplasm. The enzyme catalyses tRNA(Tyr) + L-tyrosine + ATP = L-tyrosyl-tRNA(Tyr) + AMP + diphosphate + H(+). In terms of biological role, catalyzes the attachment of tyrosine to tRNA(Tyr) in a two-step reaction: tyrosine is first activated by ATP to form Tyr-AMP and then transferred to the acceptor end of tRNA(Tyr). In Yersinia pseudotuberculosis serotype O:1b (strain IP 31758), this protein is Tyrosine--tRNA ligase.